We begin with the raw amino-acid sequence, 268 residues long: Tryptophan synthase alpha chain (268 aa).

Catalysis depends on proton acceptor residues E49 and D60.

It belongs to the TrpA family. In terms of assembly, tetramer of two alpha and two beta chains.

It carries out the reaction (1S,2R)-1-C-(indol-3-yl)glycerol 3-phosphate + L-serine = D-glyceraldehyde 3-phosphate + L-tryptophan + H2O. It participates in amino-acid biosynthesis; L-tryptophan biosynthesis; L-tryptophan from chorismate: step 5/5. Functionally, the alpha subunit is responsible for the aldol cleavage of indoleglycerol phosphate to indole and glyceraldehyde 3-phosphate. The chain is Tryptophan synthase alpha chain from Aeromonas salmonicida (strain A449).